The following is a 305-amino-acid chain: Oxidoreductase OpS7 (305 aa).

Belongs to the oxidoreductase OpS7 family.

It functions in the pathway secondary metabolite biosynthesis. Oxidoreductase; part of the gene cluster that mediates the biosynthesis of the bibenzoquinone oosporein, a metabolite required for fungal virulence that acts by evading host immunity to facilitate fungal multiplication in insects. The non-reducing polyketide synthase OpS1 produces orsellinic acid by condensing acetyl-CoA with 3 malonyl-CoA units. Orsellinic acid is then hydroxylated to benzenetriol by the hydroxylase OpS4. The intermediate is oxidized either nonenzymatically to 5,5'-dideoxy-oosporein or enzymatically to benzenetetrol by the oxidoreductase OpS7. The latter is further dimerized to oosporein by the catalase OpS5. OpS6 probably functions en route for protecting cells against oxidative stress by scavenging any leaked free radical form of benzenetetrol by activating the thiol group of glutathione. This is Oxidoreductase OpS7 from Beauveria bassiana (strain ARSEF 2860) (White muscardine disease fungus).